The sequence spans 2604 residues: MTFNNIKDENNDDIAIIGMGFRFPGGGNNPYQFWNQLSNKMDGISKIPTEKWSRSFYEQKYINNEYGGVLKDEEWKNFDPLFFGISPKEAPIIDPQQRLLMTTLWEAFEDANIKPSTFRGSDTAVFIGMMNTDYQRCQFRDISYVNPYITPGTAGSFISNRLSFSFDLRGPSMTLDTACSSSLNAVYLGCQAIANGDSKMAIVGGVNGIFDPCFSMTFSGLNMLGHKGQCRSFDAGADGYIRSEGGGVCILKKYSDAIKDGDRIYCVIKGGSSNVDGYNAKTNIIQPSMKAQGENIEIALKKSGVNPSDIYYIEAHGTGTPVGDPIEIEAISRIFKDNHTPDAPLYIGSVKSNIGHLESAAGIASLIKVALSLKNRSLVPNIHFEKPNPLIKFEDWNIRVVTDEIQFPINKLINMGINCFGLSGSNCHMILSEAPINYDELLKTTNNNSTSSSSNDDKKEYLIPFSANCNISLDKYIEKLISNQSIYKDTILFKDFVKHQTISKSNLIKRKVITASDWDDFLNKRNETTSTSSLTSTISAPASSTPVIYVFTGQGPQWRDMGKALYETESVFKDAIDHCDKLLANYFGYSILQKLLSLESEDSPEIHHPILAQPSIFLIQVGLVALYKSFGISPSIVVGHSFGEIPSALFSDVISLETAVKIVYYRGLAQNLTMGTGRLLSIGIGADAYLEKCALLYPEIEIACYNDPNSIVITGSEQDLLGAKSTLSAEGVFCAFLGTPCSFHSSKQEMIKEKIFKDLSDLPESNVPCVPFFSTITGSQLSHKGFYNVQYIYDNLRMPVEFTKAISNIFNFIEENESYKNAIFLEIGPHPTLGFYIPKCKPSNSTITSKPIIVSPLHKKKEELTQFKLAISTLYCNGVEIDFASGQQLLPTSSSSGGGDISSFKESTNKLPRYQWDFEEYWDEPNQSKMVKRGPSNNLLGHDQFAGNTLMELFIDIDKSAHQYLKGHKIKGKYLFPGSGYIDNILRQFNGQDITIFNLEFSNPFFLKDGVQHHLQTSITPTTKGEFKVEFFIKDNRNSTKWTKTSNGRIGLFKHNPKNNKLDIEKLKSQCSFTTLTKSEVYNKLLLLSLPYGPTFQRVESCSIGDGCSFFKLSMSPCSEFDKDFLNPSIIDCAFHGLLVLSEGPQEIVFDRLQDMKFYSSNVPSTRPQFIYAFAKFDKIEGNSTHGSLNIILEDGTLLISIKNVKCTSLIRLKKQSIKYPSQNVYSHHWQSKDSPLTLIENQLIEEKSSESKINFEKLLNDKLFNYYLIRLLNQSIKSEFIEFDYKTSTVDTLDIGSKNAKLLEKIQSILNPIDSLDQSIDITSLKQAIIVKSSFKNEIKLVEKSIKRIVSLLKGGESEHFSPSNPSSPNDTPRNNSNNCSSKNNAASSDDADDDTNNEETINQLNNEPFNFSNSQFISNQNQLISKTIVNSFDRLINSIEIGEKKLIKIIDLSSIYQNYQLSKLLLLQLNQLLINLSNNNNIEIEYTIPSNTKNIDSITEETKSISNVLNIKYRSFDLQDDLESNGYLNSNYDLIITSLLLVSTNSIDSNEVLSKLYKLLLPKGQLILMEPPKGVLSFNLLFANDFKQSLEIKSEQEIKSLIIYCGFTKIETNLNTKDDEEQQQPPPPSILIVQAEKRDIESMSLTFSSDPKSLNSSYSNCIFIVSKEQKENPTSYIQEYFDITEFFCQNATIIEADDSELLTKTIESGVGKNDIIFFLVSLEELTIENYKQVTMQYTLVNQILLRNNLSTRFALLTYDSQNGGKNYLGSSLIGTFRYFLEFRSLNIFSIDVDKDSIDNLTLFLRLVDLSTIGDRETIVRNNKIFVQKIFKEPKLLSPSNNYEKNTNNLFLYSNSNLDFSFQSKEKLLHGCVEIKVMSTGINYKDSLFYRGLLPQEVFSKGDIYSPPFGLECAGYITRVAPSGVTRFKVGDQVVGFASHSLSSHVTTHQNKIVLKPENISFNEAAAVCVVYATSYYSIFHIGAFIADKESILVHSATGGVGLASLNLLKWKRNQLKKHGNSEISNDASIYATVGSKEKIDYLQEKYGDLITAIYNSRDTEYCDEIKQQSAQGGVDLILNTLSGDYLSSNFRSLSQVGRIMDLSVTQLVENDSLDFSNFKYHVGYNTIDLDRATKYNSKIIRDILTEVFDAISDGSLENIPVKVFPAIQVKTAIEYINERVHIGKIVVDFENFEQDILKPALQEKENPIQLNKVKKLEHTCDTLNNTILITGQTGIAVHILKWIISGSVLNSNKSQQQVTDFIILSRSSLKWELENLINQTKHKYGDRFRFHYKSVNIADLNSTRTAIDQVYSSCKNVSPIKSVLHFATVYEYILPENITQTVIDNTHNPKAVGAINLHNLSIEKDWKLENFILFSSIGAIIGGSKQCAYSSANLVLDSLSNYRKSIGLASTSINWGGLDAGGVAATDKSVASFLEGQGILLVSLSKILGCLDSVFQPSNSHLSNFMLSSFNIDNLLSSAPQMKRKMDHHLTNYKTSSASSDDSLGDSGSTQAKVISTISELLSIHPSKLNLDTRLKDYGIDSLLTVQLKNWIDKEFTKNLFTHLQLSSSSINSIIQRISSKSTSTSTPNPTNTSKQTATKKT.

The Ketosynthase family 3 (KS3) domain occupies 11-433 (NDDIAIIGMG…GSNCHMILSE (423 aa)). Residues cysteine 179, histidine 316, and histidine 356 each act as for beta-ketoacyl synthase activity in the active site. An acyl/malonyl transferases region spans residues 631-664 (GISPSIVVGHSFGEIPSALFSDVISLETAVKIVY). Catalysis depends on serine 641, which acts as the For acyl/malonyl transferase activity. Positions 937 to 1057 (NNLLGHDQFA…GRIGLFKHNP (121 aa)) are N-terminal hotdog fold. Residues 937-1216 (NNLLGHDQFA…CTSLIRLKKQ (280 aa)) enclose the PKS/mFAS DH domain. The active-site Proton acceptor; for dehydratase activity is histidine 968. The tract at residues 1072 to 1216 (SFTTLTKSEV…CTSLIRLKKQ (145 aa)) is C-terminal hotdog fold. Catalysis depends on aspartate 1132, which acts as the Proton donor; for dehydratase activity. The tract at residues 1357–1407 (GESEHFSPSNPSSPNDTPRNNSNNCSSKNNAASSDDADDDTNNEETINQLN) is disordered. Positions 1363 to 1390 (SPSNPSSPNDTPRNNSNNCSSKNNAASS) are enriched in low complexity. Residues 2507-2584 (GDSGSTQAKV…SIIQRISSKS (78 aa)) enclose the Carrier domain. O-(pantetheine 4'-phosphoryl)serine is present on serine 2544. Positions 2581 to 2597 (SSKSTSTSTPNPTNTSK) are enriched in low complexity. Positions 2581 to 2604 (SSKSTSTSTPNPTNTSKQTATKKT) are disordered.

It depends on pantetheine 4'-phosphate as a cofactor.

Functionally, probable polyketide synthase. In Dictyostelium discoideum (Social amoeba), this protein is Probable polyketide synthase 17 (pks17).